Here is a 284-residue protein sequence, read N- to C-terminus: L-ribulose-5-phosphate 3-epimerase UlaE (284 aa).

Belongs to the L-ribulose-5-phosphate 3-epimerase family.

The catalysed reaction is L-ribulose 5-phosphate = L-xylulose 5-phosphate. It participates in cofactor degradation; L-ascorbate degradation; D-xylulose 5-phosphate from L-ascorbate: step 3/4. Its function is as follows. Catalyzes the isomerization of L-xylulose-5-phosphate to L-ribulose-5-phosphate. Is involved in the anaerobic L-ascorbate utilization. The polypeptide is L-ribulose-5-phosphate 3-epimerase UlaE (Shigella flexneri).